The sequence spans 69 residues: Intrepicalcin (69 aa).

Residues M1–A27 form the signal peptide. Positions S28–R36 are excised as a propeptide. 3 disulfide bridges follow: C39–C53, C46–C57, and C52–C68. Residues R59–R60 form an essential for stimulation of [3H]ryanodine binding to RYR1 region.

Belongs to the scorpion calcin family. In terms of tissue distribution, expressed by the venom gland.

The protein resides in the secreted. In terms of biological role, this toxin stabilizes ryanodine receptor 1 (RyR1) opening in a long-lasting subconductance state (55% of the full conductance state). Furthermore, it triggers calcium release from sarcoplasmic vesicles (45.3 nM are enough to induce a sharp release, and 50% of the total calcium is released after toxin (100 nM) addition) probably by acting as a cell-penetrating peptide (CPP). In addition, it has been shown to dose-dependently stimulate ryanodine binding to RyR1 (EC(50)=17.4 nM). It also augments the bell-shaped calcium-[3H]ryanodine binding curve that is maximal at about 10 uM calcium concentration. It binds a different site as ryanodine. It acts synergistically with caffeine. In vivo, intracerebroventricular injection into mice induces neurotoxic symptoms, followed by death. The sequence is that of Intrepicalcin from Thorellius intrepidus (Scorpion).